A 623-amino-acid polypeptide reads, in one-letter code: MAU2 chromatid cohesion factor homolog (623 aa).

3 TPR repeats span residues 96 to 129 (FDTA…SQNN), 451 to 484 (GGFY…ANAE), and 491 to 524 (SCSL…ASKI).

The protein belongs to the SCC4/mau-2 family. In terms of assembly, interacts with Nipped-B to form the cohesin loading complex.

It is found in the nucleus. The protein resides in the nucleoplasm. Functionally, required for association of the cohesin complex with chromatin during interphase. Plays a role in sister chromatid cohesion and normal progression through prometaphase. This chain is MAU2 chromatid cohesion factor homolog, found in Drosophila grimshawi (Hawaiian fruit fly).